We begin with the raw amino-acid sequence, 626 residues long: MNFRNLAIWLVIVAVLGGVFVVSQNSRTKSSSEISYSQLLKDVDAGKIKSAEIAGQTVLAKTADNKTLTVNAPMNSEELVNRMVAKNADVKFKSGSISFLAILVQLLPILLVVGVWLFLMRQMQGGAKGAMGFGKSKARLLTENKNRITFEDVAGVDEAKEELQEVVDFLKDPAKFQRLGGKIPKGALLVGPPGTGKTLIARAVAGEAGVPFFTISGSDFVEMFVGVGASRVRDMFEQAKKNAPCIIFIDEIDAVGRHRGAGLGGGNDEREQTLNQLLVEMDGFEANEGIILIAATNRPDVLDPALLRPGRFDRQVVVPNPDVAGREKIIRVHMKNVPLAADVDVKTLARGTPGFSGADLANLVNEAALMAARKNRRMVTMQDFEQAKDKVMMGAERRSMAMNEEEKKLTAYHEGGHAIVALNVPLADPVHKATIVPRGRALGMVMQLPEGDRYSMKYQQMTSRLAIMMGGRVAEEIIFGKENITSGASSDIKAATDLARNMVTRWGYSDILGTVAYGDNQDEVFLGHSVARTQNVSEETARLIDSEVKRLVQYGLDEARRILTDKIDDLHTLGKALLEYETLSGEEIADILKGIPPKREEEEAATAVIAPSLVPLSPGAGASVTA.

At 1-5 the chain is on the cytoplasmic side; it reads MNFRN. Residues 6–26 traverse the membrane as a helical segment; it reads LAIWLVIVAVLGGVFVVSQNS. Over 27 to 98 the chain is Periplasmic; the sequence is RTKSSSEISY…DVKFKSGSIS (72 aa). A helical membrane pass occupies residues 99-119; it reads FLAILVQLLPILLVVGVWLFL. At 120–626 the chain is on the cytoplasmic side; sequence MRQMQGGAKG…SPGAGASVTA (507 aa). An ATP-binding site is contributed by 191–198; the sequence is GPPGTGKT. His413 contributes to the Zn(2+) binding site. Glu414 is a catalytic residue. Residues His417 and Asp491 each coordinate Zn(2+).

The protein in the central section; belongs to the AAA ATPase family. It in the C-terminal section; belongs to the peptidase M41 family. As to quaternary structure, homohexamer. Zn(2+) is required as a cofactor.

Its subcellular location is the cell inner membrane. Acts as a processive, ATP-dependent zinc metallopeptidase for both cytoplasmic and membrane proteins. Plays a role in the quality control of integral membrane proteins. Its function is as follows. Absence of FtsH leads to increased sigma-32 levels, which suggests, in analogy to E.coli, that sigma-32 is a substrate for FtsH. May play a role in the general stress response, as overexpression leads to improved resistance to salt stress. This Caulobacter vibrioides (strain NA1000 / CB15N) (Caulobacter crescentus) protein is ATP-dependent zinc metalloprotease FtsH.